A 354-amino-acid chain; its full sequence is 4-hydroxy-2-oxovalerate aldolase 5 (354 aa).

The 253-residue stretch at 11–263 folds into the Pyruvate carboxyltransferase domain; sequence VTVHDMCLRD…ETGCDLFKLM (253 aa). 19–20 contributes to the substrate binding site; the sequence is RD. D20 is a binding site for Mn(2+). Residue H23 is the Proton acceptor of the active site. Substrate is bound by residues S173 and H202. Mn(2+)-binding residues include H202 and H204. Y293 is a binding site for substrate.

It belongs to the 4-hydroxy-2-oxovalerate aldolase family.

It catalyses the reaction (S)-4-hydroxy-2-oxopentanoate = acetaldehyde + pyruvate. This chain is 4-hydroxy-2-oxovalerate aldolase 5, found in Dechloromonas aromatica (strain RCB).